We begin with the raw amino-acid sequence, 78 residues long: Large ribosomal subunit protein uL24 (78 aa).

Belongs to the universal ribosomal protein uL24 family. Part of the 50S ribosomal subunit.

Its function is as follows. One of two assembly initiator proteins, it binds directly to the 5'-end of the 23S rRNA, where it nucleates assembly of the 50S subunit. Functionally, one of the proteins that surrounds the polypeptide exit tunnel on the outside of the subunit. This chain is Large ribosomal subunit protein uL24, found in Campylobacter curvus (strain 525.92).